A 340-amino-acid chain; its full sequence is Geranylgeranyl pyrophosphate synthase atmG (340 aa).

Positions 19 to 48 are enriched in polar residues; that stretch reads NLDASYPTSSSLSTEPIDTRSSSPQGSAST. The tract at residues 19–51 is disordered; that stretch reads NLDASYPTSSSLSTEPIDTRSSSPQGSASTPVD. Residues lysine 69, arginine 72, and histidine 101 each contribute to the isopentenyl diphosphate site. Mg(2+)-binding residues include aspartate 108 and aspartate 112. Position 117 (arginine 117) interacts with dimethylallyl diphosphate. Arginine 118 is a binding site for isopentenyl diphosphate. Dimethylallyl diphosphate-binding residues include lysine 195, threonine 196, and glutamine 229. A Mg(2+)-binding site is contributed by aspartate 232. The dimethylallyl diphosphate site is built by asparagine 236, lysine 246, and lysine 256.

Belongs to the FPP/GGPP synthase family. Mg(2+) serves as cofactor.

It carries out the reaction isopentenyl diphosphate + dimethylallyl diphosphate = (2E)-geranyl diphosphate + diphosphate. The catalysed reaction is isopentenyl diphosphate + (2E)-geranyl diphosphate = (2E,6E)-farnesyl diphosphate + diphosphate. The enzyme catalyses isopentenyl diphosphate + (2E,6E)-farnesyl diphosphate = (2E,6E,10E)-geranylgeranyl diphosphate + diphosphate. Functionally, geranylgeranyl pyrophosphate synthase; part of the ATM1 gene cluster that mediates the biosynthesis of aflatrem, a tremorgenic mycotoxin with acute neurotoxic effects. Synthesis of geranylgeranyl diphosphate (GGPP) by AtmG (a GGPP synthase) precedes condensation of GGPP with indole 3-glycerol phosphate, followed by epoxidation and cyclization by AtmM (a FAD-dependent monooxygenase) and AtmC (a prenyltransferase) to produce paspaline. AtmB is also essential for paspaline production, but its exact role has not been identified yet. AtmP, a cytochrome P450 monooxygenase, subsequently converts paspaline to 13-desoxypaxilline via PC-M6 by removal of the C-30 methyl group and oxidation at C-10. AtmQ, a cytochrome P450 monooxygenase, then catalyzes the oxidation of 13-desoxypaxilline, first at C-7 to produce paspalicine and then at C-13 to form paspalinine. Finally, AtmD prenylates paspalinine to form aflatrem. In Aspergillus flavus, this protein is Geranylgeranyl pyrophosphate synthase atmG.